Reading from the N-terminus, the 222-residue chain is C-8 sterol isomerase ERG2 (222 aa).

A helical transmembrane segment spans residues 3–23 (FFPLLLLIGVVGYIMNVLFTT).

Belongs to the ERG2 family.

It is found in the endoplasmic reticulum membrane. The catalysed reaction is fecosterol = episterol. It participates in steroid metabolism; ergosterol biosynthesis; ergosterol from zymosterol: step 2/5. Its activity is regulated as follows. Catalytic activity is inhibited by the morphilines tridemorph, fenpropimorph, and fenpropidin. Its function is as follows. C-8 sterol isomerase; part of the third module of ergosterol biosynthesis pathway that includes the late steps of the pathway. ERG2 catalyzes the reaction which results in unsaturation at C-7 in the B ring of sterols and thus converts fecosterol to episterol. The third module or late pathway involves the ergosterol synthesis itself through consecutive reactions that mainly occur in the endoplasmic reticulum (ER) membrane. Firstly, the squalene synthase ERG9 catalyzes the condensation of 2 farnesyl pyrophosphate moieties to form squalene, which is the precursor of all steroids. Squalene synthase is crucial for balancing the incorporation of farnesyl diphosphate (FPP) into sterol and nonsterol isoprene synthesis. Secondly, the squalene epoxidase ERG1 catalyzes the stereospecific oxidation of squalene to (S)-2,3-epoxysqualene, which is considered to be a rate-limiting enzyme in steroid biosynthesis. Then, the lanosterol synthase ERG7 catalyzes the cyclization of (S)-2,3 oxidosqualene to lanosterol, a reaction that forms the sterol core. In the next steps, lanosterol is transformed to zymosterol through a complex process involving various demethylation, reduction and desaturation reactions. The lanosterol 14-alpha-demethylase ERG11 (also known as CYP51) catalyzes C14-demethylation of lanosterol to produce 4,4'-dimethyl cholesta-8,14,24-triene-3-beta-ol, which is critical for ergosterol biosynthesis. The C-14 reductase ERG24 reduces the C14=C15 double bond of 4,4-dimethyl-cholesta-8,14,24-trienol to produce 4,4-dimethyl-cholesta-8,24-dienol. 4,4-dimethyl-cholesta-8,24-dienol is substrate of the C-4 demethylation complex ERG25-ERG26-ERG27 in which ERG25 catalyzes the three-step monooxygenation required for the demethylation of 4,4-dimethyl and 4alpha-methylsterols, ERG26 catalyzes the oxidative decarboxylation that results in a reduction of the 3-beta-hydroxy group at the C-3 carbon to an oxo group, and ERG27 is responsible for the reduction of the keto group on the C-3. ERG28 has a role as a scaffold to help anchor ERG25, ERG26 and ERG27 to the endoplasmic reticulum and ERG29 regulates the activity of the iron-containing C4-methylsterol oxidase ERG25. Then, the sterol 24-C-methyltransferase ERG6 catalyzes the methyl transfer from S-adenosyl-methionine to the C-24 of zymosterol to form fecosterol. The C-8 sterol isomerase ERG2 catalyzes the reaction which results in unsaturation at C-7 in the B ring of sterols and thus converts fecosterol to episterol. The sterol-C5-desaturase ERG3 then catalyzes the introduction of a C-5 double bond in the B ring to produce 5-dehydroepisterol. The C-22 sterol desaturase ERG5 further converts 5-dehydroepisterol into ergosta-5,7,22,24(28)-tetraen-3beta-ol by forming the C-22(23) double bond in the sterol side chain. Finally, ergosta-5,7,22,24(28)-tetraen-3beta-ol is substrate of the C-24(28) sterol reductase ERG4 to produce ergosterol. This is C-8 sterol isomerase ERG2 from Saccharomyces cerevisiae (strain ATCC 204508 / S288c) (Baker's yeast).